Consider the following 498-residue polypeptide: Type II secretion system protein E (498 aa).

261 to 268 is an ATP binding site; sequence GPTGSGKS. Residues C394, C397, C425, and C428 each contribute to the Zn(2+) site.

The protein belongs to the GSP E family. Forms homooligomers; most probably hexamers. Interacts with OutL/GspL. It depends on Zn(2+) as a cofactor.

It is found in the cell inner membrane. It catalyses the reaction ATP + H2O + cellular proteinSide 1 = ADP + phosphate + cellular proteinSide 2.. Its function is as follows. ATPase component of the type II secretion system required for the energy-dependent secretion of extracellular factors such as proteases and toxins from the periplasm. Acts as a molecular motor to provide the energy that is required for assembly of the pseudopilus and the extrusion of substrates generated in the cytoplasm. In Pectobacterium carotovorum subsp. carotovorum (Erwinia carotovora subsp. carotovora), this protein is Type II secretion system protein E (outE).